The chain runs to 352 residues: Staphylococcal superantigen-like 3 (352 aa).

A signal peptide spans Met-1–Ala-30. Residues Ala-61–Thr-165 are disordered. Basic and acidic residues predominate over residues Arg-69–Lys-104. The segment covering Pro-114–Pro-141 has biased composition (low complexity). Residues Gln-142–Met-164 show a composition bias toward polar residues. The interval Ile-228 to Tyr-326 is sialyl Lewis X-binding.

This sequence belongs to the staphylococcal/streptococcal toxin family. In terms of assembly, interacts with host TLR2 (via its extracellular domain).

It is found in the secreted. In terms of biological role, secreted protein that plays an essential role in immune innate response inhibition by interacting with and inhibiting host TLR2. In turn, bacteria recognition by immune cells is impaired and cytokine production is inhibited. Mechanistically, by interacting with TLR2, blocks ligand binding and thus inhibits activation. Second, by interacting with an already formed TLR2-lipopeptide complex, prevents TLR heterodimerization and downstream signaling. The interaction with host TLR2 does not involve sialyl Lewis X interactions. In Staphylococcus aureus (strain Newman), this protein is Staphylococcal superantigen-like 3.